Here is a 189-residue protein sequence, read N- to C-terminus: Probable nicotinate-nucleotide adenylyltransferase (189 aa).

Belongs to the NadD family.

The catalysed reaction is nicotinate beta-D-ribonucleotide + ATP + H(+) = deamido-NAD(+) + diphosphate. It participates in cofactor biosynthesis; NAD(+) biosynthesis; deamido-NAD(+) from nicotinate D-ribonucleotide: step 1/1. Its function is as follows. Catalyzes the reversible adenylation of nicotinate mononucleotide (NaMN) to nicotinic acid adenine dinucleotide (NaAD). This is Probable nicotinate-nucleotide adenylyltransferase from Bacillus cereus (strain B4264).